The primary structure comprises 236 residues: Ribose-5-phosphate isomerase A (236 aa).

Substrate is bound by residues 33–36, 90–93, and 103–106; these read TGST, DGAD, and KGGG. Residue glutamate 112 is the Proton acceptor of the active site. Lysine 130 lines the substrate pocket.

The protein belongs to the ribose 5-phosphate isomerase family. Homodimer.

It carries out the reaction aldehydo-D-ribose 5-phosphate = D-ribulose 5-phosphate. It participates in carbohydrate degradation; pentose phosphate pathway; D-ribose 5-phosphate from D-ribulose 5-phosphate (non-oxidative stage): step 1/1. Functionally, catalyzes the reversible conversion of ribose-5-phosphate to ribulose 5-phosphate. The sequence is that of Ribose-5-phosphate isomerase A from Trichormus variabilis (strain ATCC 29413 / PCC 7937) (Anabaena variabilis).